The chain runs to 396 residues: 1-deoxy-D-xylulose 5-phosphate reductoisomerase (396 aa).

NADPH contacts are provided by threonine 10, glycine 11, serine 12, isoleucine 13, glycine 36, lysine 37, asparagine 38, and asparagine 124. Lysine 125 is a 1-deoxy-D-xylulose 5-phosphate binding site. Position 126 (glutamate 126) interacts with NADPH. Residue aspartate 150 coordinates Mn(2+). Residues serine 151, glutamate 152, serine 186, and histidine 209 each contribute to the 1-deoxy-D-xylulose 5-phosphate site. Glutamate 152 lines the Mn(2+) pocket. Glycine 215 is a binding site for NADPH. Residues serine 222, asparagine 227, lysine 228, and glutamate 231 each coordinate 1-deoxy-D-xylulose 5-phosphate. A Mn(2+)-binding site is contributed by glutamate 231.

This sequence belongs to the DXR family. Mg(2+) serves as cofactor. Requires Mn(2+) as cofactor.

The enzyme catalyses 2-C-methyl-D-erythritol 4-phosphate + NADP(+) = 1-deoxy-D-xylulose 5-phosphate + NADPH + H(+). Its pathway is isoprenoid biosynthesis; isopentenyl diphosphate biosynthesis via DXP pathway; isopentenyl diphosphate from 1-deoxy-D-xylulose 5-phosphate: step 1/6. Catalyzes the NADPH-dependent rearrangement and reduction of 1-deoxy-D-xylulose-5-phosphate (DXP) to 2-C-methyl-D-erythritol 4-phosphate (MEP). This is 1-deoxy-D-xylulose 5-phosphate reductoisomerase from Actinobacillus pleuropneumoniae serotype 5b (strain L20).